Reading from the N-terminus, the 482-residue chain is Glutamyl-tRNA(Gln) amidotransferase subunit A (482 aa).

Active-site charge relay system residues include lysine 75 and serine 150. Catalysis depends on serine 174, which acts as the Acyl-ester intermediate.

This sequence belongs to the amidase family. GatA subfamily. As to quaternary structure, heterotrimer of A, B and C subunits.

It catalyses the reaction L-glutamyl-tRNA(Gln) + L-glutamine + ATP + H2O = L-glutaminyl-tRNA(Gln) + L-glutamate + ADP + phosphate + H(+). Functionally, allows the formation of correctly charged Gln-tRNA(Gln) through the transamidation of misacylated Glu-tRNA(Gln) in organisms which lack glutaminyl-tRNA synthetase. The reaction takes place in the presence of glutamine and ATP through an activated gamma-phospho-Glu-tRNA(Gln). In Rippkaea orientalis (strain PCC 8801 / RF-1) (Cyanothece sp. (strain PCC 8801)), this protein is Glutamyl-tRNA(Gln) amidotransferase subunit A.